A 617-amino-acid chain; its full sequence is Proline--tRNA ligase (617 aa).

Belongs to the class-II aminoacyl-tRNA synthetase family. ProS type 1 subfamily. Homodimer.

It is found in the cytoplasm. It carries out the reaction tRNA(Pro) + L-proline + ATP = L-prolyl-tRNA(Pro) + AMP + diphosphate. In terms of biological role, catalyzes the attachment of proline to tRNA(Pro) in a two-step reaction: proline is first activated by ATP to form Pro-AMP and then transferred to the acceptor end of tRNA(Pro). As ProRS can inadvertently accommodate and process non-cognate amino acids such as alanine and cysteine, to avoid such errors it has two additional distinct editing activities against alanine. One activity is designated as 'pretransfer' editing and involves the tRNA(Pro)-independent hydrolysis of activated Ala-AMP. The other activity is designated 'posttransfer' editing and involves deacylation of mischarged Ala-tRNA(Pro). The misacylated Cys-tRNA(Pro) is not edited by ProRS. The chain is Proline--tRNA ligase from Streptococcus pneumoniae (strain P1031).